The primary structure comprises 260 residues: Voltage-dependent calcium channel gamma-6 subunit (260 aa).

The segment at Arg14 to Pro33 is disordered. A compositionally biased stretch (basic residues) spans Arg15 to Gly25. The next 4 membrane-spanning stretches (helical) occupy residues Leu43–Val63, Val143–Leu163, Phe169–Leu189, and Leu221–Leu241.

Belongs to the PMP-22/EMP/MP20 family. CACNG subfamily. Interacts with CACNA1C. Identified in a complex with the L-type calcium channel subunits CACNA1C, CACNA2D1 and either CACNB1 or CACNB2. Detected in heart left ventricle.

It localises to the cell membrane. In terms of biological role, regulates the activity of L-type calcium channels that contain CACNA1C as pore-forming subunit. This chain is Voltage-dependent calcium channel gamma-6 subunit (CACNG6), found in Homo sapiens (Human).